We begin with the raw amino-acid sequence, 416 residues long: Thyroid hormone receptor alpha-A (416 aa).

Residues 1–13 (MEPMSNKQDSNSS) are compositionally biased toward polar residues. Residues 1-37 (MEPMSNKQDSNSSEGDEKGWPDVPKRKRKNSQCSMKS) are disordered. The tract at residues 1 to 58 (MEPMSNKQDSNSSEGDEKGWPDVPKRKRKNSQCSMKSMSALSVSVPGYIPSYLEKDEP) is modulating. The span at 15–24 (GDEKGWPDVP) shows a compositional bias: basic and acidic residues. 2 NR C4-type zinc fingers span residues 59–79 (CVVCGDKATGYHYRCITCEGC) and 97–121 (CKYEGCCIIDKITRNQCQLCRFKKC). The segment at residues 59 to 126 (CVVCGDKATG…RFKKCISVGM (68 aa)) is a DNA-binding region (nuclear receptor). The NR LBD domain occupies 169–413 (AEWELIRMAT…PPLFLEVFED (245 aa)).

The protein belongs to the nuclear hormone receptor family. NR1 subfamily.

It is found in the nucleus. Its function is as follows. High affinity receptor for triiodothyronine. The protein is Thyroid hormone receptor alpha-A (thra1) of Paralichthys olivaceus (Bastard halibut).